Reading from the N-terminus, the 50-residue chain is Large ribosomal subunit protein bL33A (50 aa).

This sequence belongs to the bacterial ribosomal protein bL33 family.

This is Large ribosomal subunit protein bL33A from Streptococcus thermophilus (strain CNRZ 1066).